An 830-amino-acid polypeptide reads, in one-letter code: Probable glucan 1,3-beta-glucosidase D (830 aa).

Composition is skewed to basic and acidic residues over residues 1–11 (MPGHSRSRDRL) and 74–84 (VHEHDHDHEYD). 3 disordered regions span residues 1-91 (MPGH…EEPW), 127-163 (MSGA…QRRK), and 260-297 (GGPG…STSA). At 1 to 307 (MPGHSRSRDR…RPSFWKRYHK (307 aa)) the chain is on the cytoplasmic side. The segment covering 147-163 (GKGKKRLDRETRRQRRK) has biased composition (basic residues). A helical; Signal-anchor for type II membrane protein membrane pass occupies residues 308–328 (TFIFFAILIVLAAIAIPVGII). At 329–830 (EARRLHGTSG…PSFGNLPEYY (502 aa)) the chain is on the extracellular side. Residues asparagine 341, asparagine 376, asparagine 381, asparagine 393, asparagine 397, asparagine 546, and asparagine 558 are each glycosylated (N-linked (GlcNAc...) asparagine). Glutamate 597 (proton donor) is an active-site residue. Residues asparagine 610, asparagine 669, and asparagine 689 are each glycosylated (N-linked (GlcNAc...) asparagine). Glutamate 702 serves as the catalytic Nucleophile.

This sequence belongs to the glycosyl hydrolase 5 (cellulase A) family.

Its subcellular location is the cell membrane. It carries out the reaction Successive hydrolysis of beta-D-glucose units from the non-reducing ends of (1-&gt;3)-beta-D-glucans, releasing alpha-glucose.. Functionally, glucosidase involved in the degradation of cellulosic biomass. Active on lichenan. The polypeptide is Probable glucan 1,3-beta-glucosidase D (exgD) (Aspergillus niger (strain ATCC MYA-4892 / CBS 513.88 / FGSC A1513)).